Reading from the N-terminus, the 407-residue chain is Tryptophan synthase beta chain (407 aa).

Position 91 is an N6-(pyridoxal phosphate)lysine (Lys-91).

This sequence belongs to the TrpB family. As to quaternary structure, tetramer of two alpha and two beta chains. Pyridoxal 5'-phosphate is required as a cofactor.

The catalysed reaction is (1S,2R)-1-C-(indol-3-yl)glycerol 3-phosphate + L-serine = D-glyceraldehyde 3-phosphate + L-tryptophan + H2O. It functions in the pathway amino-acid biosynthesis; L-tryptophan biosynthesis; L-tryptophan from chorismate: step 5/5. Its function is as follows. The beta subunit is responsible for the synthesis of L-tryptophan from indole and L-serine. The sequence is that of Tryptophan synthase beta chain from Streptococcus pneumoniae (strain P1031).